Here is a 360-residue protein sequence, read N- to C-terminus: tRNA N6-adenosine threonylcarbamoyltransferase (360 aa).

Fe cation-binding residues include His115 and His119. Residues 137–141, Asp170, Gly183, and Asn283 contribute to the substrate site; that span reads LVSGG. Asp311 contacts Fe cation.

This sequence belongs to the KAE1 / TsaD family. It depends on Fe(2+) as a cofactor.

The protein resides in the cytoplasm. The catalysed reaction is L-threonylcarbamoyladenylate + adenosine(37) in tRNA = N(6)-L-threonylcarbamoyladenosine(37) in tRNA + AMP + H(+). Functionally, required for the formation of a threonylcarbamoyl group on adenosine at position 37 (t(6)A37) in tRNAs that read codons beginning with adenine. Is involved in the transfer of the threonylcarbamoyl moiety of threonylcarbamoyl-AMP (TC-AMP) to the N6 group of A37, together with TsaE and TsaB. TsaD likely plays a direct catalytic role in this reaction. The protein is tRNA N6-adenosine threonylcarbamoyltransferase of Rhizobium meliloti (strain 1021) (Ensifer meliloti).